The chain runs to 231 residues: MDRRVAAVGDLERRIGHRFEDRELLERALTHASVGDGAKKVRDNEVLEFIGDRVLGLLAAEALAQRFPKAKEGELAPRLNALVSRETCARVARKAELGPALRLSASSSKIGGRETDSILAGATEALMAALYQDGGLEAARKVFLDLWNDEFDRAGEGRPRDPKTALQEWAQGQGRPLPTYRVLDRTGPDHAPVFTVEVSVTGVDPAIAKGKSRQEAEKAAAKALLEREGAG.

Residues 8 to 135 (VGDLERRIGH…LMAALYQDGG (128 aa)) enclose the RNase III domain. Glu-48 lines the Mg(2+) pocket. Active-site residues include Asp-52 and Glu-124. A Mg(2+)-binding site is contributed by Glu-124. The DRBM domain maps to 161–230 (DPKTALQEWA…AKALLEREGA (70 aa)). A disordered region spans residues 210–231 (GKSRQEAEKAAAKALLEREGAG). Over residues 212-231 (SRQEAEKAAAKALLEREGAG) the composition is skewed to basic and acidic residues.

This sequence belongs to the ribonuclease III family. As to quaternary structure, homodimer. Mg(2+) serves as cofactor.

The protein resides in the cytoplasm. The catalysed reaction is Endonucleolytic cleavage to 5'-phosphomonoester.. In terms of biological role, digests double-stranded RNA. Involved in the processing of primary rRNA transcript to yield the immediate precursors to the large and small rRNAs (23S and 16S). Processes some mRNAs, and tRNAs when they are encoded in the rRNA operon. Processes pre-crRNA and tracrRNA of type II CRISPR loci if present in the organism. The sequence is that of Ribonuclease 3 from Caulobacter vibrioides (strain ATCC 19089 / CIP 103742 / CB 15) (Caulobacter crescentus).